The sequence spans 386 residues: Phosphomevalonate dehydratase large subunit (386 aa).

Residues Gly48, Val49, Ser50, Asn53, Arg63, Asn79, and Pro80 each contribute to the (R)-5-phosphomevalonate site. Cys110 provides a ligand contact to [4Fe-4S] cluster. Residues Glu129 and Ser130 each contribute to the (R)-5-phosphomevalonate site. Residues Cys283 and Cys342 each coordinate [4Fe-4S] cluster. Lys361 contributes to the (R)-5-phosphomevalonate binding site.

It belongs to the AcnX type II large subunit family. In terms of assembly, heterodimer composed of a large subunit (PMDh-L) and a small subunit (PMDh-S). Requires [4Fe-4S] cluster as cofactor.

It carries out the reaction (R)-5-phosphomevalonate = (2E)-3-methyl-5-phosphooxypent-2-enoate + H2O. Its pathway is isoprenoid biosynthesis; isopentenyl diphosphate biosynthesis via mevalonate pathway. Component of a hydro-lyase that catalyzes the dehydration of mevalonate 5-phosphate (MVA5P) to form trans-anhydromevalonate 5-phosphate (tAHMP). Involved in the archaeal mevalonate (MVA) pathway, which provides fundamental precursors for isoprenoid biosynthesis, such as isopentenyl diphosphate (IPP) and dimethylallyl diphosphate (DMAPP). The protein is Phosphomevalonate dehydratase large subunit of Thermococcus kodakarensis (strain ATCC BAA-918 / JCM 12380 / KOD1) (Pyrococcus kodakaraensis (strain KOD1)).